Reading from the N-terminus, the 283-residue chain is Thymidylate synthase (283 aa).

Arginine 22 provides a ligand contact to dUMP. Cysteine 160 functions as the Nucleophile in the catalytic mechanism. DUMP contacts are provided by residues 180–183, asparagine 191, and 221–223; these read RSCD and HIY. A (6R)-5,10-methylene-5,6,7,8-tetrahydrofolate-binding site is contributed by aspartate 183. Residue alanine 282 participates in (6R)-5,10-methylene-5,6,7,8-tetrahydrofolate binding.

Belongs to the thymidylate synthase family. Bacterial-type ThyA subfamily. As to quaternary structure, homodimer.

The protein resides in the cytoplasm. It carries out the reaction dUMP + (6R)-5,10-methylene-5,6,7,8-tetrahydrofolate = 7,8-dihydrofolate + dTMP. It participates in pyrimidine metabolism; dTTP biosynthesis. Its function is as follows. Catalyzes the reductive methylation of 2'-deoxyuridine-5'-monophosphate (dUMP) to 2'-deoxythymidine-5'-monophosphate (dTMP) while utilizing 5,10-methylenetetrahydrofolate (mTHF) as the methyl donor and reductant in the reaction, yielding dihydrofolate (DHF) as a by-product. This enzymatic reaction provides an intracellular de novo source of dTMP, an essential precursor for DNA biosynthesis. In Colwellia psychrerythraea (strain 34H / ATCC BAA-681) (Vibrio psychroerythus), this protein is Thymidylate synthase.